The chain runs to 609 residues: Glutamine--fructose-6-phosphate aminotransferase [isomerizing] (609 aa).

C2 acts as the Nucleophile; for GATase activity in catalysis. One can recognise a Glutamine amidotransferase type-2 domain in the interval 2–218 (CGIVGAIAQR…EGDIAEITRR (217 aa)). SIS domains are found at residues 286 to 426 (ADEL…LKGL) and 458 to 599 (LAED…VDQP). K604 (for Fru-6P isomerization activity) is an active-site residue.

In terms of assembly, homodimer.

It is found in the cytoplasm. It carries out the reaction D-fructose 6-phosphate + L-glutamine = D-glucosamine 6-phosphate + L-glutamate. In terms of biological role, catalyzes the first step in hexosamine metabolism, converting fructose-6P into glucosamine-6P using glutamine as a nitrogen source. This Shigella flexneri protein is Glutamine--fructose-6-phosphate aminotransferase [isomerizing].